A 335-amino-acid chain; its full sequence is GTPase Obg (335 aa).

Residues 1–158 (MFVDQITLEL…RLVELELKLI (158 aa)) enclose the Obg domain. The region spanning 159–334 (ADIGLVGFPN…LYDLFKSKLS (176 aa)) is the OBG-type G domain. GTP is bound by residues 165–172 (GFPNAGKS), 190–194 (FTTLH), 215–218 (DIPG), 285–288 (NKID), and 315–317 (SGL). Mg(2+) is bound by residues Ser-172 and Thr-192.

It belongs to the TRAFAC class OBG-HflX-like GTPase superfamily. OBG GTPase family. As to quaternary structure, monomer. Mg(2+) serves as cofactor.

Its subcellular location is the cytoplasm. Its function is as follows. An essential GTPase which binds GTP, GDP and possibly (p)ppGpp with moderate affinity, with high nucleotide exchange rates and a fairly low GTP hydrolysis rate. Plays a role in control of the cell cycle, stress response, ribosome biogenesis and in those bacteria that undergo differentiation, in morphogenesis control. The polypeptide is GTPase Obg (Chlamydia trachomatis serovar L2 (strain ATCC VR-902B / DSM 19102 / 434/Bu)).